The sequence spans 417 residues: MIELKNYTLNFGPQHPAAHGVLRLVLELEGETIVRADPHIGLLHRATEKLAETKPYIQSIGYMDRLDYVSMMCNEHAYVMAIEKLLGIEPPLRAKYIRTMFDEVTRILNHLLWLGATALDIGAMTVFLYCFREREDLFDCYEAVSGARMHATYYRPGGVARDLPDTMPQYKPSRWHNEREIEKKNHNRQGSLLDFLWAFTERFPRCVDEYETLLTDNRIWKQRTVDIGIVSPENALQWGFTGPMLRGSGIAWDLRKKQSYAAYDRVDFDIPVGKTGDCYDRYLVRVEELRQSNRIIRQCIEWLRKHPGPVKVDDYKVTPPRRVVMKHDMEALIHHFKLFTEGFCLPRGEVYSSVEAPKGEFGIYMVSDGANKPYRLKIRAPGFAHLSSFDDMVRGHMLADGVAILASQDIVFGEIDR.

It belongs to the complex I 49 kDa subunit family. In terms of assembly, NDH-1 is composed of 14 different subunits. Subunits NuoB, C, D, E, F, and G constitute the peripheral sector of the complex.

Its subcellular location is the cell inner membrane. It carries out the reaction a quinone + NADH + 5 H(+)(in) = a quinol + NAD(+) + 4 H(+)(out). Functionally, NDH-1 shuttles electrons from NADH, via FMN and iron-sulfur (Fe-S) centers, to quinones in the respiratory chain. The immediate electron acceptor for the enzyme in this species is believed to be ubiquinone. Couples the redox reaction to proton translocation (for every two electrons transferred, four hydrogen ions are translocated across the cytoplasmic membrane), and thus conserves the redox energy in a proton gradient. This chain is NADH-quinone oxidoreductase subunit D, found in Legionella pneumophila (strain Corby).